We begin with the raw amino-acid sequence, 471 residues long: GTPase Der (471 aa).

EngA-type G domains follow at residues Pro-3 to Ser-168 and Val-178 to Ala-353. GTP contacts are provided by residues Gly-9–Ser-16, Asp-56–Ile-60, Asn-120–Glu-123, Gly-184–Ser-191, Asp-231–Met-235, and Asn-296–Asp-299. The region spanning Arg-354 to Glu-438 is the KH-like domain.

The protein belongs to the TRAFAC class TrmE-Era-EngA-EngB-Septin-like GTPase superfamily. EngA (Der) GTPase family. Associates with the 50S ribosomal subunit.

Functionally, GTPase that plays an essential role in the late steps of ribosome biogenesis. The protein is GTPase Der of Symbiobacterium thermophilum (strain DSM 24528 / JCM 14929 / IAM 14863 / T).